A 124-amino-acid chain; its full sequence is Small ribosomal subunit protein uS12 (124 aa).

The interval 1-25 (MATINQLVRKPRQASTYKSASPALD) is disordered.

It belongs to the universal ribosomal protein uS12 family. As to quaternary structure, part of the 30S ribosomal subunit. Contacts proteins S8 and S17. May interact with IF1 in the 30S initiation complex.

In terms of biological role, with S4 and S5 plays an important role in translational accuracy. Functionally, interacts with and stabilizes bases of the 16S rRNA that are involved in tRNA selection in the A site and with the mRNA backbone. Located at the interface of the 30S and 50S subunits, it traverses the body of the 30S subunit contacting proteins on the other side and probably holding the rRNA structure together. The combined cluster of proteins S8, S12 and S17 appears to hold together the shoulder and platform of the 30S subunit. This is Small ribosomal subunit protein uS12 from Xylella fastidiosa (strain 9a5c).